A 990-amino-acid chain; its full sequence is Bifunctional glutamine synthetase adenylyltransferase/adenylyl-removing enzyme (990 aa).

Positions 1–474 (MIFSAITADL…HYAKLFEGDP (474 aa)) are adenylyl removase. An adenylyl transferase region spans residues 478-990 (AKLPPVDYGA…FSRLIGGEDA (513 aa)).

Belongs to the GlnE family. It depends on Mg(2+) as a cofactor.

It carries out the reaction [glutamine synthetase]-O(4)-(5'-adenylyl)-L-tyrosine + phosphate = [glutamine synthetase]-L-tyrosine + ADP. The catalysed reaction is [glutamine synthetase]-L-tyrosine + ATP = [glutamine synthetase]-O(4)-(5'-adenylyl)-L-tyrosine + diphosphate. In terms of biological role, involved in the regulation of glutamine synthetase GlnA, a key enzyme in the process to assimilate ammonia. When cellular nitrogen levels are high, the C-terminal adenylyl transferase (AT) inactivates GlnA by covalent transfer of an adenylyl group from ATP to specific tyrosine residue of GlnA, thus reducing its activity. Conversely, when nitrogen levels are low, the N-terminal adenylyl removase (AR) activates GlnA by removing the adenylyl group by phosphorolysis, increasing its activity. The regulatory region of GlnE binds the signal transduction protein PII (GlnB) which indicates the nitrogen status of the cell. The polypeptide is Bifunctional glutamine synthetase adenylyltransferase/adenylyl-removing enzyme (Rhodopseudomonas palustris (strain ATCC BAA-98 / CGA009)).